The chain runs to 149 residues: Large ribosomal subunit protein bL9 (149 aa).

It belongs to the bacterial ribosomal protein bL9 family.

Binds to the 23S rRNA. This chain is Large ribosomal subunit protein bL9, found in Helicobacter pylori (strain ATCC 700392 / 26695) (Campylobacter pylori).